The sequence spans 215 residues: Large ribosomal subunit protein bL25 (215 aa).

The segment at Val190 to Glu215 is disordered. The span at Asp193–Pro205 shows a compositional bias: acidic residues. Positions Glu206–Glu215 are enriched in basic and acidic residues.

Belongs to the bacterial ribosomal protein bL25 family. CTC subfamily. Part of the 50S ribosomal subunit; part of the 5S rRNA/L5/L18/L25 subcomplex. Contacts the 5S rRNA. Binds to the 5S rRNA independently of L5 and L18.

Its function is as follows. This is one of the proteins that binds to the 5S RNA in the ribosome where it forms part of the central protuberance. In Maricaulis maris (strain MCS10) (Caulobacter maris), this protein is Large ribosomal subunit protein bL25.